The chain runs to 144 residues: Large ribosomal subunit protein uL15 (144 aa).

The disordered stretch occupies residues 1–59; it reads MHLNTLAPAPGAKKSSKRVGRGMGSGLGKTGGRGHKGQKSRSGGSVKPGFEGGQMPIQR. Residues 21–31 are compositionally biased toward gly residues; the sequence is RGMGSGLGKTG.

This sequence belongs to the universal ribosomal protein uL15 family. Part of the 50S ribosomal subunit.

Functionally, binds to the 23S rRNA. The polypeptide is Large ribosomal subunit protein uL15 (Pseudoalteromonas atlantica (strain T6c / ATCC BAA-1087)).